The primary structure comprises 230 residues: Sugar fermentation stimulation protein homolog (230 aa).

The protein belongs to the SfsA family.

The polypeptide is Sugar fermentation stimulation protein homolog (Clostridium botulinum (strain 657 / Type Ba4)).